The sequence spans 196 residues: Large ribosomal subunit protein eL15 (196 aa).

2 disordered regions span residues serine 72–threonine 93 and glycine 163–lysine 196.

It belongs to the eukaryotic ribosomal protein eL15 family. As to quaternary structure, part of the 50S ribosomal subunit. Interacts with protein L7Ae and weakly with L44e.

This chain is Large ribosomal subunit protein eL15 (rpl15e), found in Haloarcula marismortui (strain ATCC 43049 / DSM 3752 / JCM 8966 / VKM B-1809) (Halobacterium marismortui).